A 994-amino-acid polypeptide reads, in one-letter code: Valine--tRNA ligase (994 aa).

The 'HIGH' region signature appears at proline 43–histidine 53. Over residues glutamine 329–serine 345 the composition is skewed to polar residues. Residues glutamine 329–glutamine 355 form a disordered region. A 'KMSKS' region motif is present at residues lysine 585 to serine 589. Residue lysine 588 participates in ATP binding. A disordered region spans residues alanine 692–arginine 714. The span at alanine 696–alanine 707 shows a compositional bias: low complexity. Residues leucine 928–leucine 994 are a coiled coil.

Belongs to the class-I aminoacyl-tRNA synthetase family. ValS type 1 subfamily. As to quaternary structure, monomer.

The protein localises to the cytoplasm. It carries out the reaction tRNA(Val) + L-valine + ATP = L-valyl-tRNA(Val) + AMP + diphosphate. In terms of biological role, catalyzes the attachment of valine to tRNA(Val). As ValRS can inadvertently accommodate and process structurally similar amino acids such as threonine, to avoid such errors, it has a 'posttransfer' editing activity that hydrolyzes mischarged Thr-tRNA(Val) in a tRNA-dependent manner. In Xylella fastidiosa (strain 9a5c), this protein is Valine--tRNA ligase.